A 290-amino-acid polypeptide reads, in one-letter code: Phosphatidylglycerol--prolipoprotein diacylglyceryl transferase (290 aa).

Transmembrane regions (helical) follow at residues 21–41 (VSLH…MWLA), 60–80 (LLYA…VLFY), 96–116 (WDGG…MFWF), 130–150 (FIAP…FING), 198–218 (SQLY…NLFI), 225–245 (GAVS…VEAF), and 258–278 (VISM…IMMI). Arg143 lines the a 1,2-diacyl-sn-glycero-3-phospho-(1'-sn-glycerol) pocket.

This sequence belongs to the Lgt family.

It localises to the cell inner membrane. It carries out the reaction L-cysteinyl-[prolipoprotein] + a 1,2-diacyl-sn-glycero-3-phospho-(1'-sn-glycerol) = an S-1,2-diacyl-sn-glyceryl-L-cysteinyl-[prolipoprotein] + sn-glycerol 1-phosphate + H(+). It participates in protein modification; lipoprotein biosynthesis (diacylglyceryl transfer). Functionally, catalyzes the transfer of the diacylglyceryl group from phosphatidylglycerol to the sulfhydryl group of the N-terminal cysteine of a prolipoprotein, the first step in the formation of mature lipoproteins. The protein is Phosphatidylglycerol--prolipoprotein diacylglyceryl transferase of Serratia proteamaculans (strain 568).